The chain runs to 326 residues: RNA/RNP complex-1-interacting phosphatase (326 aa).

The segment at 1 to 28 (MNQWHYGRYSRGRDFTARAPPKKKGKNQ) is disordered. A Tyrosine-protein phosphatase domain is found at 59–206 (FEAKLMPEEC…LQKRRVRKNQ (148 aa)). Cysteine 150 acts as the Phosphocysteine intermediate in catalysis. A substrate-binding site is contributed by 151 to 156 (THGLNR). The active-site Proton donor/acceptor is the arginine 156. Residues 200-258 (RRVRKNQNASASRSGGLEDSAHLTEQVHTTNKPVNKGPKKSRRGGHLESSQHVQTQSSA) form a disordered region. The segment covering 247–258 (ESSQHVQTQSSA) has biased composition (polar residues).

The protein belongs to the protein-tyrosine phosphatase family. Non-receptor class dual specificity subfamily. As to quaternary structure, monomer. May interact with SFRS7 and SFRS9/SRP30C.

The protein resides in the nucleus. It is found in the nucleus speckle. In terms of biological role, possesses RNA 5'-triphosphatase and diphosphatase activities, but displays a poor protein-tyrosine phosphatase activity. In addition, has phosphatase activity with ATP, ADP and O-methylfluorescein phosphate (in vitro). Binds to RNA. May participate in nuclear mRNA metabolism. This is RNA/RNP complex-1-interacting phosphatase (Dusp11) from Rattus norvegicus (Rat).